A 716-amino-acid polypeptide reads, in one-letter code: Translation initiation factor IF-2 (716 aa).

Positions 53-135 (GGAGVTSQKP…PLKPKKELPE (83 aa)) are disordered. Over residues 57-83 (VTSQKPAETNKNKPQGINQQPAGNQPN) the composition is skewed to polar residues. Low complexity predominate over residues 93–109 (VQNNQFNKNKKNNNNNK). One can recognise a tr-type G domain in the interval 217-386 (IRPPVVTIMG…LLVSEVEELK (170 aa)). Positions 226–233 (GHVDHGKT) are G1. 226–233 (GHVDHGKT) is a binding site for GTP. The G2 stretch occupies residues 251-255 (GITQH). The tract at residues 272-275 (DTPG) is G3. Residues 272–276 (DTPGH) and 326–329 (NKVD) each bind GTP. Residues 326-329 (NKVD) form a G4 region. Residues 362–364 (SAL) are G5.

It belongs to the TRAFAC class translation factor GTPase superfamily. Classic translation factor GTPase family. IF-2 subfamily.

The protein localises to the cytoplasm. One of the essential components for the initiation of protein synthesis. Protects formylmethionyl-tRNA from spontaneous hydrolysis and promotes its binding to the 30S ribosomal subunits. Also involved in the hydrolysis of GTP during the formation of the 70S ribosomal complex. The sequence is that of Translation initiation factor IF-2 from Bacillus velezensis (strain DSM 23117 / BGSC 10A6 / LMG 26770 / FZB42) (Bacillus amyloliquefaciens subsp. plantarum).